Consider the following 384-residue polypeptide: Putative 8-amino-7-oxononanoate synthase (384 aa).

Arginine 18 lines the substrate pocket. Position 105 to 106 (105 to 106) interacts with pyridoxal 5'-phosphate; sequence GY. Substrate is bound at residue histidine 130. Pyridoxal 5'-phosphate-binding positions include serine 176, 201–204, and 233–236; these read DDAH and TLSK. Lysine 236 is modified (N6-(pyridoxal phosphate)lysine). A substrate-binding site is contributed by threonine 349.

Belongs to the class-II pyridoxal-phosphate-dependent aminotransferase family. BioF subfamily. Homodimer. Pyridoxal 5'-phosphate is required as a cofactor.

It catalyses the reaction 6-carboxyhexanoyl-[ACP] + L-alanine + H(+) = (8S)-8-amino-7-oxononanoate + holo-[ACP] + CO2. It functions in the pathway cofactor biosynthesis; biotin biosynthesis. Catalyzes the decarboxylative condensation of pimeloyl-[acyl-carrier protein] and L-alanine to produce 8-amino-7-oxononanoate (AON), [acyl-carrier protein], and carbon dioxide. In Desulfovibrio desulfuricans (strain ATCC 27774 / DSM 6949 / MB), this protein is Putative 8-amino-7-oxononanoate synthase (bioF).